The primary structure comprises 770 residues: MSKRPKLGGFSIPRPTSYSFERSQPPQRLYVPADDPDLDDIAFSDDAAAPSDAPPAGGGGAAGDEEEIDPLDAFMAEIQEEIRAPPPAPKPEALRRADSDDEDDPVESFLRAKKDSGLALAADAMHAGYDSDEEVYAAAKAVDAGMMEYDSDDNPIVVDKKKIEPIPPLDHSTIEYEPFNKDFYEEKPSVSGMSEQEVADYMKSLAIRVSGFDVPRPIKSFADCGFPVQLMNAIAKQGYEKPTTIQCQALPIVLSGRDIIGIAKTGSGKTAAFVLPMIVHIMDQPELEKEEGPIGVVCAPTRELAHQIYLEAKKFAKPYNLRVAAVYGGVSKFDQFKELKAGCEIVIATPGRLIDLLKMKALKMFRATYLVLDEADRMFDLGFEPQIRSIVGQIRPDRQTLLFSATMPYKVERLAREILTDPIRVTVGQVGSANEDIKQVVNVLPSDAEKMPWLLEKLPGMIDDGDVLVFAAKKARVDEIESQLNQRGFRIAALHGDKDQASRMETLQKFKSGVYHVLVATDVAARGLDIKSIKTVVNFDIAKEMDMHIHRIGRTGRAGDKDGTAYTLITQKEVRFAGELVHCLIAAGQDVPNELMDLAMKDGRFRANRDSRKGGKKSGKGKGGGGGGGGGSGARGRGRGVRGVDFGLGIGYNAESGSVPAPRSAALNSLKTGMMQNFKSSFVSASSSNTPSNSAPSRGAPSSFVRPALRGFVSGGTIGGDANQARAVLPAPSFVPASRPAENTVENANPNPESSRDRTRERKRPSGWDR.

The tract at residues 1 to 106 (MSKRPKLGGF…ADSDDEDDPV (106 aa)) is disordered. Residues 14–26 (RPTSYSFERSQPP) are compositionally biased toward polar residues. Over residues 34–43 (DDPDLDDIAF) the composition is skewed to acidic residues. A compositionally biased stretch (low complexity) spans 44–55 (SDDAAAPSDAPP). The short motif at 219-247 (KSFADCGFPVQLMNAIAKQGYEKPTTIQC) is the Q motif element. In terms of domain architecture, Helicase ATP-binding spans 250 to 425 (LPIVLSGRDI…REILTDPIRV (176 aa)). 263 to 270 (AKTGSGKT) is a binding site for ATP. The DEAD box signature appears at 373 to 376 (DEAD). Residues 436–599 (DIKQVVNVLP…DVPNELMDLA (164 aa)) form the Helicase C-terminal domain. A compositionally biased stretch (basic and acidic residues) spans 604 to 613 (RFRANRDSRK). Disordered stretches follow at residues 604–640 (RFRA…RGRG), 683–704 (VSAS…PSSF), and 729–770 (LPAP…GWDR). Over residues 621-635 (GKGGGGGGGGGSGAR) the composition is skewed to gly residues. Low complexity predominate over residues 683–697 (VSASSSNTPSNSAPS). The span at 744–753 (TVENANPNPE) shows a compositional bias: polar residues. Residues 754–770 (SSRDRTRERKRPSGWDR) show a composition bias toward basic and acidic residues.

It belongs to the DEAD box helicase family.

It catalyses the reaction ATP + H2O = ADP + phosphate + H(+). The protein is DEAD-box ATP-dependent RNA helicase 24 of Oryza sativa subsp. japonica (Rice).